Consider the following 152-residue polypeptide: Acidic phospholipase A2 homolog textilotoxin D chain (152 aa).

The N-terminal stretch at 1-19 is a signal peptide; sequence MHPAHLLVLLGVCVSLLGA. 7 disulfides stabilise this stretch: C38/C104, C54/C151, C56/C72, C71/C132, C78/C125, C88/C118, and C111/C123. An N-linked (GlcNAc...) asparagine glycan is attached at N112.

Belongs to the phospholipase A2 family. Group I subfamily. D49 sub-subfamily. In terms of assembly, heterohexamer. 2 forms exist: 2 A or 2 B chains, 2 C chains and 2 covalently-linked D chains, and 1 A or 1 B, 1 C, 2 covalently-linked D chains and 2 differentially glycosylated covalently-linked D chains. Textilotoxin was originally described as pentameric. Expressed by the venom gland.

It is found in the secreted. Its function is as follows. Snake venom oligomeric phospholipase A2 that has potent presynaptic neurotoxicity. Chain D is not itself neurotoxic, but it is essential for the neurotoxicity of textilotoxin. Chain D possesses a very low phospholipase activity. This Pseudonaja textilis (Eastern brown snake) protein is Acidic phospholipase A2 homolog textilotoxin D chain.